A 353-amino-acid polypeptide reads, in one-letter code: L-tryptophan dehydrogenase (353 aa).

R44 is a binding site for NAD(+). K80 serves as the catalytic Proton donor/acceptor. NAD(+) contacts are provided by residues D114, T146, 176-181 (GLGNVG), K204, and 255-257 (AAN).

It belongs to the Glu/Leu/Phe/Val dehydrogenases family. As to quaternary structure, homodimer.

The enzyme catalyses L-tryptophan + NAD(+) + H2O = indole-3-pyruvate + NH4(+) + NADH + H(+). Its activity is regulated as follows. Highly susceptible to inhibition by indole-3-pyruvate. Activity is not affected by the presence of metal ions, EDTA, KCl or DMSO. In terms of biological role, catalyzes the reversible oxidative deamination of L-tryptophan to indole-3-pyruvate in the presence of NAD(+). Shows weak activity with L-phenylalanine, but cannot use other L-amino acids and D-Trp. Cannot use NADP(+) for oxidative deamination of L-Trp, and shows only weak activity with NADPH for reductive amination of indole-3-pyruvate. Involved in the biosynthesis of scytonemin, a cyanobacterial radiation-absorbing pigment. In Nostoc punctiforme, this protein is L-tryptophan dehydrogenase.